Here is a 516-residue protein sequence, read N- to C-terminus: MRPAFIRGKWLSRTLELATGLGRRTCSSRESGREVRVRFAPSPTGFLHLGGLRTALYNYLFAKKHGGAFILRLEDTDRSRLVPGAAESIEDMLEWAGIPPDESPRHGGPCGPYEQSKRLDLYHVAAQALLDSGAAYRCFCTPQRLELLKREAMRNRQTPRYDNRCRHLTPKQVEEKLSRNSPFVIRFFLQEGAQPFQDLVYGWTQHDVASVEGDPVILKGDGFPTYHLANVVDDHHMCVSHVLRGAEWLISTAKHLLLYQALGWQPPQFAHLPLLLNKDGSKLSKRQGDIFIQHYVHSGYLSDALLDLITNCGSGFTENQMGRTVDTLIQQYELGKTSTHSALLDLDKLPEFNRIHLTRWIEGTETRVQLVGQLQVLLKDTYKDLELDEKHIERILLLRKGHLCRLTDLLSPEYSYLWVRPSVTREQLQCLTSEASKVKNLVVRLLQENDSGFTLETLNGELRKQLKQVKDTKYSSAMKLLRVALSGQEHGPSVAEMLLSLGRQESIVRLQNALPD.

Residues 1–39 (MRPAFIRGKWLSRTLELATGLGRRTCSSRESGREVRVRF) constitute a mitochondrion transit peptide. An L-glutamate-binding site is contributed by 38–40 (RFA). The short motif at 43-51 (PTGFLHLGG) is the 'HIGH' region element. ATP is bound at residue H48. L-glutamate contacts are provided by residues E74, 226–230 (YHLAN), and R244. Residues E247 and 282 to 286 (KLSKR) each bind ATP. Residues 282 to 286 (KLSKR) carry the 'KMSKS' region motif.

Belongs to the class-I aminoacyl-tRNA synthetase family. Glutamate--tRNA ligase type 1 subfamily.

Its subcellular location is the mitochondrion matrix. The enzyme catalyses tRNA(Glx) + L-glutamate + ATP = L-glutamyl-tRNA(Glx) + AMP + diphosphate. It carries out the reaction tRNA(Glu) + L-glutamate + ATP = L-glutamyl-tRNA(Glu) + AMP + diphosphate. It catalyses the reaction tRNA(Gln) + L-glutamate + ATP = L-glutamyl-tRNA(Gln) + AMP + diphosphate. Its function is as follows. Non-discriminating glutamyl-tRNA synthetase that catalyzes aminoacylation of both mitochondrial tRNA(Glu) and tRNA(Gln) and participates in RNA aminoacylation for mitochondrial protein translation. Attachs glutamate to tRNA(Glu) or tRNA(Gln) in a two-step reaction: glutamate is first activated by ATP to form Glu-AMP and then transferred to the acceptor end of tRNA(Glu) or tRNA(Gln). The polypeptide is Nondiscriminating glutamyl-tRNA synthetase EARS2, mitochondrial (Xenopus tropicalis (Western clawed frog)).